Consider the following 141-residue polypeptide: ATP synthase epsilon chain (141 aa).

The protein belongs to the ATPase epsilon chain family. F-type ATPases have 2 components, CF(1) - the catalytic core - and CF(0) - the membrane proton channel. CF(1) has five subunits: alpha(3), beta(3), gamma(1), delta(1), epsilon(1). CF(0) has three main subunits: a, b and c.

It localises to the cell membrane. In terms of biological role, produces ATP from ADP in the presence of a proton gradient across the membrane. The chain is ATP synthase epsilon chain from Lactococcus lactis subsp. cremoris (strain MG1363).